The chain runs to 155 residues: Small ribosomal subunit protein uS7cz/uS7cy (155 aa).

The protein belongs to the universal ribosomal protein uS7 family. In terms of assembly, part of the 30S ribosomal subunit.

The protein localises to the plastid. It is found in the chloroplast. Its function is as follows. One of the primary rRNA binding proteins, it binds directly to 16S rRNA where it nucleates assembly of the head domain of the 30S subunit. In Piper cenocladum (Ant piper), this protein is Small ribosomal subunit protein uS7cz/uS7cy (rps7-A).